We begin with the raw amino-acid sequence, 820 residues long: MAGSALPLPPPPPLSLQSPSQNQTRHSSTFSPPTLTPQTPSIRSRLSKICQDGNPQLARQLFDAIPKPTTVLWNTIIIGFICNNLPHEALLFYSRMKKTAPFTNCDAYTYSSTLKACAETKNLKAGKAVHCHLIRCLQNSSRVVHNSLMNMYVSCLNAPDCFEYDVVRKVFDNMRRKNVVAWNTLISWYVKTGRNAEACRQFGIMMRMEVKPSPVSFVNVFPAVSISRSIKKANVFYGLMLKLGDEYVKDLFVVSSAISMYAELGDIESSRRVFDSCVERNIEVWNTMIGVYVQNDCLVESIELFLEAIGSKEIVSDEVTYLLAASAVSALQQVELGRQFHGFVSKNFRELPIVIVNSLMVMYSRCGSVHKSFGVFLSMRERDVVSWNTMISAFVQNGLDDEGLMLVYEMQKQGFKIDYITVTALLSAASNLRNKEIGKQTHAFLIRQGIQFEGMNSYLIDMYSKSGLIRISQKLFEGSGYAERDQATWNSMISGYTQNGHTEKTFLVFRKMLEQNIRPNAVTVASILPACSQIGSVDLGKQLHGFSIRQYLDQNVFVASALVDMYSKAGAIKYAEDMFSQTKERNSVTYTTMILGYGQHGMGERAISLFLSMQESGIKPDAITFVAVLSACSYSGLIDEGLKIFEEMREVYNIQPSSEHYCCITDMLGRVGRVNEAYEFVKGLGEEGNIAELWGSLLGSCKLHGELELAETVSERLAKFDKGKNFSGYEVLLSNMYAEEQKWKSVDKVRRGMREKGLKKEVGRSGIEIAGYVNCFVSRDQEHPHSSEIYDVIDGLAKDMRGDSFLTTLPTVTPSLELDE.

The interval 1 to 42 (MAGSALPLPPPPPLSLQSPSQNQTRHSSTFSPPTLTPQTPSI) is disordered. A chloroplast-targeting transit peptide spans 1–50 (MAGSALPLPPPPPLSLQSPSQNQTRHSSTFSPPTLTPQTPSIRSRLSKIC). The segment covering 22–42 (NQTRHSSTFSPPTLTPQTPSI) has biased composition (polar residues). PPR repeat units follow at residues 69-99 (TTVL…MKKT), 106-136 (DAYT…LIRC), 141-177 (SRVV…MRRK), 178-212 (NVVA…EVKP), 213-247 (SPVS…GDEY), 250-284 (DLFV…NIEV), 285-316 (WNTM…EIVS), 317-347 (DEVT…VSKN), 352-382 (PIVI…MRER), 383-417 (DVVS…GFKI), 418-452 (DYIT…GIQF), 485-519 (DQAT…NIRP), 520-550 (NAVT…SIRQ), 555-585 (NVFV…TKER), 586-620 (NSVT…GIKP), 621-651 (DAIT…MREV), and 657-691 (SSEH…GNIA). The interval 693 to 770 (LWGSLLGSCK…EVGRSGIEIA (78 aa)) is type E motif. A type E(+) motif region spans residues 771-801 (GYVNCFVSRDQEHPHSSEIYDVIDGLAKDMR).

This sequence belongs to the PPR family. PCMP-E subfamily.

It is found in the plastid. Its subcellular location is the chloroplast. This is Pentatricopeptide repeat-containing protein At3g22150, chloroplastic (PCMP-E95) from Arabidopsis thaliana (Mouse-ear cress).